Consider the following 153-residue polypeptide: UPF0251 protein CT0950 (153 aa).

The protein belongs to the UPF0251 family.

The chain is UPF0251 protein CT0950 from Chlorobaculum tepidum (strain ATCC 49652 / DSM 12025 / NBRC 103806 / TLS) (Chlorobium tepidum).